A 176-amino-acid chain; its full sequence is Ribosome maturation factor RimM (176 aa).

The PRC barrel domain occupies Gly-97–Phe-176.

The protein belongs to the RimM family. Binds ribosomal protein uS19.

The protein localises to the cytoplasm. Its function is as follows. An accessory protein needed during the final step in the assembly of 30S ribosomal subunit, possibly for assembly of the head region. Essential for efficient processing of 16S rRNA. May be needed both before and after RbfA during the maturation of 16S rRNA. It has affinity for free ribosomal 30S subunits but not for 70S ribosomes. The protein is Ribosome maturation factor RimM of Pseudoalteromonas atlantica (strain T6c / ATCC BAA-1087).